Reading from the N-terminus, the 105-residue chain is Neuropeptide-like protein 32 (105 aa).

The N-terminal stretch at M1–S22 is a signal peptide. A propeptide spanning residues F23 to R54 is cleaved from the precursor. Glycine amide is present on G59. W64 is modified (tryptophan amide). Glycine amide occurs at positions 68, 73, and 80. W86 is subject to Tryptophan amide. G91 and G98 each carry glycine amide. W103 is subject to Tryptophan amide.

It belongs to the YARP (YGGW-amide related peptide) family.

It is found in the secreted. Its function is as follows. May have antimicrobial activity. In Caenorhabditis elegans, this protein is Neuropeptide-like protein 32 (nlp-32).